A 243-amino-acid polypeptide reads, in one-letter code: MTIYLTELSPETLTFPSPFTALDDPNGLLAFGGDLRPERIWAAYQQGIFPWYGPEDPILWWSPSPRAVFDPTRFQPAKSVKKFQRKHQYRVSVNHATSQVIEQCALTRPADQRWLNDSMRHAYGELAKQGRCHSVEVWQGEQLVGGLYGISVGQLFCGESMFSLATNASKIALWYFCDHFSRHQGQLIDCQVMNPHLQSLGATTLSREQFIQSLLSFKEKQVLSGCFETQWLATPTSPCAFED.

Belongs to the L/F-transferase family.

Its subcellular location is the cytoplasm. The enzyme catalyses N-terminal L-lysyl-[protein] + L-leucyl-tRNA(Leu) = N-terminal L-leucyl-L-lysyl-[protein] + tRNA(Leu) + H(+). It carries out the reaction N-terminal L-arginyl-[protein] + L-leucyl-tRNA(Leu) = N-terminal L-leucyl-L-arginyl-[protein] + tRNA(Leu) + H(+). The catalysed reaction is L-phenylalanyl-tRNA(Phe) + an N-terminal L-alpha-aminoacyl-[protein] = an N-terminal L-phenylalanyl-L-alpha-aminoacyl-[protein] + tRNA(Phe). Its function is as follows. Functions in the N-end rule pathway of protein degradation where it conjugates Leu, Phe and, less efficiently, Met from aminoacyl-tRNAs to the N-termini of proteins containing an N-terminal arginine or lysine. This chain is Leucyl/phenylalanyl-tRNA--protein transferase, found in Vibrio cholerae serotype O1 (strain ATCC 39541 / Classical Ogawa 395 / O395).